Consider the following 323-residue polypeptide: uncharacterized protein (323 aa).

Residues 1-142 (MPSVFFSYSH…QVAKAVREAA (142 aa)) enclose the TIR domain.

This is an uncharacterized protein from Sinorhizobium fredii (strain NBRC 101917 / NGR234).